Consider the following 369-residue polypeptide: N-methyltransferase imqF (369 aa).

This sequence belongs to the methyltransferase superfamily.

It participates in secondary metabolite biosynthesis. Its function is as follows. N-methyltransferase; part of the gene cluster that mediates the biosynthesis of imizoquins A to D, tripeptide-derived alkaloids that serve a protective role against oxidative stress that are essential for normal germination. ImqB is a canonical three-module NRPS that assembles the tripeptide backbone of the imizoquins via condensation of Trp, Tyr, and Leu-derived precursors. N-methylation by imqF and phenol oxidation by imqC, followed by cyclization via the FAD-dependent oxidase imqH carry out the three-step transformation of L-tyrosine into tetrahydroisoquinoline. Importantly, this sequence requires the presence of a free amine in the tyrosine moiety, indicating that isoquinoline formation occurs prior to peptide bond formation. The imidazolidin-4-one ring of imizoquins could form following additional oxidation of the methyl-derived bridgehead carbon by imqH. Lastly, O-methylation by imqG and leucine hydroxylation by imqE complete biosynthesis of the imizoquins. The protein is N-methyltransferase imqF of Aspergillus flavus (strain ATCC 200026 / FGSC A1120 / IAM 13836 / NRRL 3357 / JCM 12722 / SRRC 167).